The sequence spans 178 residues: Cell division protein SepF (178 aa).

A compositionally biased stretch (basic and acidic residues) spans Y21–A46. A disordered region spans residues Y21 to E65.

It belongs to the SepF family. In terms of assembly, homodimer. Interacts with FtsZ.

It is found in the cytoplasm. In terms of biological role, cell division protein that is part of the divisome complex and is recruited early to the Z-ring. Probably stimulates Z-ring formation, perhaps through the cross-linking of FtsZ protofilaments. Its function overlaps with FtsA. In Paenarthrobacter aurescens (strain TC1), this protein is Cell division protein SepF.